Here is a 366-residue protein sequence, read N- to C-terminus: 3-dehydroquinate synthase (366 aa).

Residues 71-76 (DGEKYK), 105-109 (GVIGD), 129-130 (TT), Lys-142, Lys-151, and 169-172 (TLQT) contribute to the NAD(+) site. Residues Glu-184, His-247, and His-264 each contribute to the Zn(2+) site.

Belongs to the sugar phosphate cyclases superfamily. Dehydroquinate synthase family. Requires Co(2+) as cofactor. The cofactor is Zn(2+). It depends on NAD(+) as a cofactor.

It is found in the cytoplasm. The enzyme catalyses 7-phospho-2-dehydro-3-deoxy-D-arabino-heptonate = 3-dehydroquinate + phosphate. It participates in metabolic intermediate biosynthesis; chorismate biosynthesis; chorismate from D-erythrose 4-phosphate and phosphoenolpyruvate: step 2/7. Its function is as follows. Catalyzes the conversion of 3-deoxy-D-arabino-heptulosonate 7-phosphate (DAHP) to dehydroquinate (DHQ). The protein is 3-dehydroquinate synthase of Actinobacillus pleuropneumoniae serotype 5b (strain L20).